Reading from the N-terminus, the 247-residue chain is Agamous-like MADS-box protein FUL-L (247 aa).

One can recognise an MADS-box domain in the interval 1–61 (MGRGRVQLKR…GKLFEYSSDS (61 aa)). Residues 88–178 (QGNWSMDYPK…AKKVKEKEKV (91 aa)) form the K-box domain. Residues 224 to 247 (EDGAEARPSPNTLMPPWMLRHVNE) form a disordered region.

As to expression, expressed in tendrils and flowers.

It is found in the nucleus. Functionally, probable transcription factor involved in flower development. The polypeptide is Agamous-like MADS-box protein FUL-L (Vitis vinifera (Grape)).